A 392-amino-acid polypeptide reads, in one-letter code: Protein-glutamate methylesterase/protein-glutamine glutaminase (392 aa).

The Response regulatory domain occupies 9-126; that stretch reads TVLIVDDSPF…GADIQALARD (118 aa). At Asp-60 the chain carries 4-aspartylphosphate. The segment at 148–194 is disordered; sequence VSRISSASGSRPPWTAGAASENTNRLSSPGSTSSTLGSAKGRSLDSG. A compositionally biased stretch (low complexity) spans 173-185; the sequence is LSSPGSTSSTLGS. In terms of domain architecture, CheB-type methylesterase spans 198–392; it reads PKYPVEIVAI…RHIVECVQRR (195 aa). Catalysis depends on residues Ser-210, His-237, and Asp-334.

This sequence belongs to the CheB family. In terms of processing, phosphorylated by CheA. Phosphorylation of the N-terminal regulatory domain activates the methylesterase activity.

It is found in the cytoplasm. It catalyses the reaction [protein]-L-glutamate 5-O-methyl ester + H2O = L-glutamyl-[protein] + methanol + H(+). The enzyme catalyses L-glutaminyl-[protein] + H2O = L-glutamyl-[protein] + NH4(+). Its function is as follows. Involved in chemotaxis. Part of a chemotaxis signal transduction system that modulates chemotaxis in response to various stimuli. Catalyzes the demethylation of specific methylglutamate residues introduced into the chemoreceptors (methyl-accepting chemotaxis proteins or MCP) by CheR. Also mediates the irreversible deamidation of specific glutamine residues to glutamic acid. The sequence is that of Protein-glutamate methylesterase/protein-glutamine glutaminase from Desulfitobacterium hafniense (strain Y51).